Reading from the N-terminus, the 140-residue chain is 3-hydroxyacyl-[acyl-carrier-protein] dehydratase FabZ (140 aa).

The active site involves histidine 47.

Belongs to the thioester dehydratase family. FabZ subfamily.

It is found in the cytoplasm. The enzyme catalyses a (3R)-hydroxyacyl-[ACP] = a (2E)-enoyl-[ACP] + H2O. In terms of biological role, involved in unsaturated fatty acids biosynthesis. Catalyzes the dehydration of short chain beta-hydroxyacyl-ACPs and long chain saturated and unsaturated beta-hydroxyacyl-ACPs. In Streptococcus agalactiae serotype III (strain NEM316), this protein is 3-hydroxyacyl-[acyl-carrier-protein] dehydratase FabZ.